The chain runs to 574 residues: Enolase 4 (574 aa).

Basic and acidic residues predominate over residues 165–175; sequence EKERRQMEREA. Residues 165–221 form a disordered region; sequence EKERRQMEREASPMPLQPEPSPVTSPAPGKKKGSGKGKKAAVVEKPIPPEETPEAVV. Positions 179 to 189 are enriched in pro residues; that stretch reads PLQPEPSPVTS. Basic residues predominate over residues 193–203; that stretch reads GKKKGSGKGKK. Glu-287 serves as a coordination point for substrate. Lys-467 (proton acceptor) is an active-site residue. A substrate-binding site is contributed by Lys-518.

It belongs to the enolase family.

It catalyses the reaction (2R)-2-phosphoglycerate = phosphoenolpyruvate + H2O. It functions in the pathway carbohydrate degradation; glycolysis; pyruvate from D-glyceraldehyde 3-phosphate: step 4/5. The sequence is that of Enolase 4 (eno4) from Xenopus tropicalis (Western clawed frog).